A 314-amino-acid chain; its full sequence is tRNA-cytidine(32) 2-sulfurtransferase (314 aa).

A PP-loop motif motif is present at residues 49–54 (SGGKDS). [4Fe-4S] cluster is bound by residues Cys-124, Cys-127, and Cys-215.

It belongs to the TtcA family. Homodimer. It depends on Mg(2+) as a cofactor. The cofactor is [4Fe-4S] cluster.

It localises to the cytoplasm. The catalysed reaction is cytidine(32) in tRNA + S-sulfanyl-L-cysteinyl-[cysteine desulfurase] + AH2 + ATP = 2-thiocytidine(32) in tRNA + L-cysteinyl-[cysteine desulfurase] + A + AMP + diphosphate + H(+). It functions in the pathway tRNA modification. In terms of biological role, catalyzes the ATP-dependent 2-thiolation of cytidine in position 32 of tRNA, to form 2-thiocytidine (s(2)C32). The sulfur atoms are provided by the cysteine/cysteine desulfurase (IscS) system. The chain is tRNA-cytidine(32) 2-sulfurtransferase from Pasteurella multocida (strain Pm70).